Here is a 382-residue protein sequence, read N- to C-terminus: Serine/threonine-protein phosphatase 2A activator 2 (382 aa).

Positions 363–382 are disordered; the sequence is SHKGVPTLGNRPGIKPIPFD.

The protein belongs to the PTPA-type PPIase family.

The protein resides in the cytoplasm. It carries out the reaction [protein]-peptidylproline (omega=180) = [protein]-peptidylproline (omega=0). In terms of biological role, PPIases accelerate the folding of proteins. It catalyzes the cis-trans isomerization of proline imidic peptide bonds in oligopeptides. Acts as a regulatory subunit for PP2A-like phosphatases modulating their activity or substrate specificity, probably by inducing a conformational change in the catalytic subunit, a direct target of the PPIase. Can reactivate inactive phosphatase PP2A-phosphatase methylesterase complexes (PP2Ai) in presence of ATP and Mg(2+) by dissociating the inactive form from the complex. The chain is Serine/threonine-protein phosphatase 2A activator 2 (RRD2) from Cryptococcus neoformans var. neoformans serotype D (strain B-3501A) (Filobasidiella neoformans).